The sequence spans 277 residues: NH(3)-dependent NAD(+) synthetase (277 aa).

36–43 is a binding site for ATP; the sequence is GLSGGIDS. A Mg(2+)-binding site is contributed by Asp-42. Arg-118 provides a ligand contact to deamido-NAD(+). Thr-138 serves as a coordination point for ATP. A Mg(2+)-binding site is contributed by Glu-143. ATP is bound by residues Lys-167 and Ser-189.

This sequence belongs to the NAD synthetase family. Homodimer.

It catalyses the reaction deamido-NAD(+) + NH4(+) + ATP = AMP + diphosphate + NAD(+) + H(+). Its pathway is cofactor biosynthesis; NAD(+) biosynthesis; NAD(+) from deamido-NAD(+) (ammonia route): step 1/1. Its function is as follows. Catalyzes the ATP-dependent amidation of deamido-NAD to form NAD. Uses ammonia as a nitrogen source. The sequence is that of NH(3)-dependent NAD(+) synthetase from Chlorobium phaeobacteroides (strain BS1).